Reading from the N-terminus, the 167-residue chain is Small ribosomal subunit protein uS5 (167 aa).

In terms of domain architecture, S5 DRBM spans 12–75 (LQEKLIAVNR…EKARRSMVTI (64 aa)).

This sequence belongs to the universal ribosomal protein uS5 family. As to quaternary structure, part of the 30S ribosomal subunit. Contacts proteins S4 and S8.

In terms of biological role, with S4 and S12 plays an important role in translational accuracy. Located at the back of the 30S subunit body where it stabilizes the conformation of the head with respect to the body. The sequence is that of Small ribosomal subunit protein uS5 from Vibrio cholerae serotype O1 (strain ATCC 39541 / Classical Ogawa 395 / O395).